The following is a 406-amino-acid chain: Ubiquitin-like modifier-activating enzyme 5 (406 aa).

Residues Gly82, Asp103, Lys126, Asn149, and Asn183 each coordinate ATP. 2 residues coordinate Zn(2+): Cys225 and Cys228. Cys249 (glycyl thioester intermediate) is an active-site residue. The Zn(2+) site is built by Cys302 and Cys307. The disordered stretch occupies residues 373-397 (EAPSKSTETTSEATTTTTGDETSLD). Over residues 378–393 (STETTSEATTTTTGDE) the composition is skewed to low complexity.

Belongs to the ubiquitin-activating E1 family. UBA5 subfamily.

In terms of biological role, E1-like enzyme which activates UFM1. This Drosophila willistoni (Fruit fly) protein is Ubiquitin-like modifier-activating enzyme 5.